We begin with the raw amino-acid sequence, 147 residues long: D-aminoacyl-tRNA deacylase (147 aa).

The Gly-cisPro motif, important for rejection of L-amino acids motif lies at G136 to P137.

The protein belongs to the DTD family. As to quaternary structure, homodimer.

It localises to the cytoplasm. The catalysed reaction is glycyl-tRNA(Ala) + H2O = tRNA(Ala) + glycine + H(+). It carries out the reaction a D-aminoacyl-tRNA + H2O = a tRNA + a D-alpha-amino acid + H(+). In terms of biological role, an aminoacyl-tRNA editing enzyme that deacylates mischarged D-aminoacyl-tRNAs. Also deacylates mischarged glycyl-tRNA(Ala), protecting cells against glycine mischarging by AlaRS. Acts via tRNA-based rather than protein-based catalysis; rejects L-amino acids rather than detecting D-amino acids in the active site. By recycling D-aminoacyl-tRNA to D-amino acids and free tRNA molecules, this enzyme counteracts the toxicity associated with the formation of D-aminoacyl-tRNA entities in vivo and helps enforce protein L-homochirality. The polypeptide is D-aminoacyl-tRNA deacylase (Streptococcus thermophilus (strain CNRZ 1066)).